Reading from the N-terminus, the 146-residue chain is Large ribosomal subunit protein uL15 (146 aa).

A disordered region spans residues methionine 1–proline 56. 2 stretches are compositionally biased toward gly residues: residues arginine 21–glutamine 35 and serine 42–glycine 52.

Belongs to the universal ribosomal protein uL15 family. As to quaternary structure, part of the 50S ribosomal subunit.

Binds to the 23S rRNA. This Clostridium botulinum (strain Langeland / NCTC 10281 / Type F) protein is Large ribosomal subunit protein uL15.